The chain runs to 90 residues: uncharacterized protein (90 aa).

A signal peptide spans 1-18 (MKTLPVLVLSLTLLTVFS). The tract at residues 28-50 (QAKQLLRSRRQDRPSKPGFPDEP) is disordered.

It localises to the secreted. This is an uncharacterized protein from Homo sapiens (Human).